The sequence spans 160 residues: SsrA-binding protein (160 aa).

Positions 134–160 (RKAHDKREAVKERDWNRDKARLMRDRG) are disordered. Basic and acidic residues predominate over residues 138 to 160 (DKREAVKERDWNRDKARLMRDRG).

The protein belongs to the SmpB family.

It is found in the cytoplasm. In terms of biological role, required for rescue of stalled ribosomes mediated by trans-translation. Binds to transfer-messenger RNA (tmRNA), required for stable association of tmRNA with ribosomes. tmRNA and SmpB together mimic tRNA shape, replacing the anticodon stem-loop with SmpB. tmRNA is encoded by the ssrA gene; the 2 termini fold to resemble tRNA(Ala) and it encodes a 'tag peptide', a short internal open reading frame. During trans-translation Ala-aminoacylated tmRNA acts like a tRNA, entering the A-site of stalled ribosomes, displacing the stalled mRNA. The ribosome then switches to translate the ORF on the tmRNA; the nascent peptide is terminated with the 'tag peptide' encoded by the tmRNA and targeted for degradation. The ribosome is freed to recommence translation, which seems to be the essential function of trans-translation. The chain is SsrA-binding protein from Azorhizobium caulinodans (strain ATCC 43989 / DSM 5975 / JCM 20966 / LMG 6465 / NBRC 14845 / NCIMB 13405 / ORS 571).